The chain runs to 343 residues: Glucokinase (343 aa).

Residue 18–23 coordinates ATP; that stretch reads GDIGGT.

This sequence belongs to the bacterial glucokinase family.

The protein resides in the cytoplasm. The catalysed reaction is D-glucose + ATP = D-glucose 6-phosphate + ADP + H(+). This is Glucokinase from Brucella abortus (strain 2308).